The following is a 384-amino-acid chain: S-adenosylmethionine synthase (384 aa).

H15 is a binding site for ATP. D17 provides a ligand contact to Mg(2+). Residue E43 coordinates K(+). L-methionine is bound by residues E56 and Q99. A flexible loop region spans residues 99-109 (QSPDINQGVDR). ATP-binding positions include 164–166 (DAK), 230–231 (RF), D239, 245–246 (RK), A262, and K266. D239 is an L-methionine binding site. L-methionine is bound at residue K270.

This sequence belongs to the AdoMet synthase family. In terms of assembly, homotetramer; dimer of dimers. Mg(2+) is required as a cofactor. Requires K(+) as cofactor.

It localises to the cytoplasm. The enzyme catalyses L-methionine + ATP + H2O = S-adenosyl-L-methionine + phosphate + diphosphate. The protein operates within amino-acid biosynthesis; S-adenosyl-L-methionine biosynthesis; S-adenosyl-L-methionine from L-methionine: step 1/1. Functionally, catalyzes the formation of S-adenosylmethionine (AdoMet) from methionine and ATP. The overall synthetic reaction is composed of two sequential steps, AdoMet formation and the subsequent tripolyphosphate hydrolysis which occurs prior to release of AdoMet from the enzyme. This is S-adenosylmethionine synthase from Shigella boydii serotype 18 (strain CDC 3083-94 / BS512).